The sequence spans 377 residues: Chaperone protein DnaJ (377 aa).

A J domain is found at 4 to 69 (DYYEVLGVSK…EKRARYDQMG (66 aa)). The segment at 131–213 (GTEKEIQVPR…CSGKGTTRKV (83 aa)) adopts a CR-type zinc-finger fold. The Zn(2+) site is built by Cys-144, Cys-147, Cys-161, Cys-164, Cys-187, Cys-190, Cys-201, and Cys-204. 4 CXXCXGXG motif repeats span residues 144–151 (CTECHGSG), 161–168 (CSQCHGTG), 187–194 (CPACNGSG), and 201–208 (CKECSGKG).

It belongs to the DnaJ family. Homodimer. The cofactor is Zn(2+).

Its subcellular location is the cytoplasm. Its function is as follows. Participates actively in the response to hyperosmotic and heat shock by preventing the aggregation of stress-denatured proteins and by disaggregating proteins, also in an autonomous, DnaK-independent fashion. Unfolded proteins bind initially to DnaJ; upon interaction with the DnaJ-bound protein, DnaK hydrolyzes its bound ATP, resulting in the formation of a stable complex. GrpE releases ADP from DnaK; ATP binding to DnaK triggers the release of the substrate protein, thus completing the reaction cycle. Several rounds of ATP-dependent interactions between DnaJ, DnaK and GrpE are required for fully efficient folding. Also involved, together with DnaK and GrpE, in the DNA replication of plasmids through activation of initiation proteins. The sequence is that of Chaperone protein DnaJ from Desulfitobacterium hafniense (strain DSM 10664 / DCB-2).